We begin with the raw amino-acid sequence, 444 residues long: Elongation factor 1-alpha (444 aa).

The tr-type G domain maps to lysine 15 to arginine 236. The G1 stretch occupies residues glycine 24 to serine 31. Glycine 24–serine 31 is a binding site for GTP. Serine 31 is a binding site for Mg(2+). Positions glycine 80–glutamate 84 are G2. Positions aspartate 101–glycine 104 are G3. Residues aspartate 101–histidine 105 and asparagine 163–aspartate 166 contribute to the GTP site. Residues asparagine 163 to aspartate 166 form a G4 region. The G5 stretch occupies residues serine 202–valine 204.

Belongs to the TRAFAC class translation factor GTPase superfamily. Classic translation factor GTPase family. EF-Tu/EF-1A subfamily.

The protein resides in the cytoplasm. The enzyme catalyses GTP + H2O = GDP + phosphate + H(+). Its function is as follows. GTP hydrolase that promotes the GTP-dependent binding of aminoacyl-tRNA to the A-site of ribosomes during protein biosynthesis. This chain is Elongation factor 1-alpha, found in Pyrobaculum arsenaticum (strain DSM 13514 / JCM 11321 / PZ6).